Here is a 468-residue protein sequence, read N- to C-terminus: ATP synthase subunit beta (468 aa).

An ATP-binding site is contributed by 155–162 (GGAGVGKT).

It belongs to the ATPase alpha/beta chains family. In terms of assembly, F-type ATPases have 2 components, CF(1) - the catalytic core - and CF(0) - the membrane proton channel. CF(1) has five subunits: alpha(3), beta(3), gamma(1), delta(1), epsilon(1). CF(0) has three main subunits: a(1), b(2) and c(9-12). The alpha and beta chains form an alternating ring which encloses part of the gamma chain. CF(1) is attached to CF(0) by a central stalk formed by the gamma and epsilon chains, while a peripheral stalk is formed by the delta and b chains.

The protein resides in the cell inner membrane. The enzyme catalyses ATP + H2O + 4 H(+)(in) = ADP + phosphate + 5 H(+)(out). Its function is as follows. Produces ATP from ADP in the presence of a proton gradient across the membrane. The catalytic sites are hosted primarily by the beta subunits. The sequence is that of ATP synthase subunit beta from Leptospira biflexa serovar Patoc (strain Patoc 1 / ATCC 23582 / Paris).